The sequence spans 304 residues: tRNA pseudouridine synthase B (304 aa).

Aspartate 48 functions as the Nucleophile in the catalytic mechanism.

It belongs to the pseudouridine synthase TruB family. Type 1 subfamily.

It carries out the reaction uridine(55) in tRNA = pseudouridine(55) in tRNA. Functionally, responsible for synthesis of pseudouridine from uracil-55 in the psi GC loop of transfer RNAs. The chain is tRNA pseudouridine synthase B from Pseudomonas aeruginosa (strain UCBPP-PA14).